The chain runs to 221 residues: Elongation factor Ts (221 aa).

The involved in Mg(2+) ion dislocation from EF-Tu stretch occupies residues 82–85 (TDFV).

This sequence belongs to the EF-Ts family.

It is found in the cytoplasm. Associates with the EF-Tu.GDP complex and induces the exchange of GDP to GTP. It remains bound to the aminoacyl-tRNA.EF-Tu.GTP complex up to the GTP hydrolysis stage on the ribosome. This chain is Elongation factor Ts, found in Synechococcus elongatus (strain ATCC 33912 / PCC 7942 / FACHB-805) (Anacystis nidulans R2).